Here is a 73-residue protein sequence, read N- to C-terminus: MKFAIVITLLLVAFSAVALADKSIERAVMDLITARDDDCGKLFADCTSDSDCCENWVCSKTGFVKNICKYNFG.

Positions 1-20 (MKFAIVITLLLVAFSAVALA) are cleaved as a signal peptide. Positions 21-35 (DKSIERAVMDLITAR) are excised as a propeptide. 3 disulfides stabilise this stretch: Cys-39/Cys-53, Cys-46/Cys-58, and Cys-52/Cys-68. Phe-72 bears the Phenylalanine amide mark.

Belongs to the neurotoxin 10 (Hwtx-1) family. Expressed by the venom gland.

It is found in the secreted. Functionally, insecticidal toxin that potently and irreversibly blocks voltage-gated sodium channels (Nav) in cockroach dorsal unpaired median (DUM) neurons (IC(50)=833.7 nM). It does not change both the steady-state activation and inactivation curves, suggesting it acts as a pore blocker (possibly at Nav site 1). Does not show toxicity when intraperitoneally injected into mouse. The sequence is that of Mu-sparatoxin-Hv2 from Heteropoda venatoria (Brown huntsman spider).